We begin with the raw amino-acid sequence, 212 residues long: Disintegrin-like halysetin (212 aa).

A Disintegrin domain is found at 4 to 90; that stretch reads PPVCGNELLE…ECPADVFHKN (87 aa). Disulfide bonds link Cys7–Cys26, Cys18–Cys36, Cys62–Cys82, Cys69–Cys94, Cys101–Cys106, Cys113–Cys128, Cys151–Cys158, Cys163–Cys174, and Cys200–Cys205. The D/ECD-tripeptide motif lies at 68-70; it reads ECD.

It belongs to the venom metalloproteinase (M12B) family. P-III subfamily. P-IIIb sub-subfamily. Monomer. As to expression, expressed by the venom gland.

It localises to the secreted. Inhibits human platelet aggregation stimulated by collagen with an IC(50) of 420 nM. The polypeptide is Disintegrin-like halysetin (Gloydius halys (Chinese water mocassin)).